Consider the following 151-residue polypeptide: Methylglyoxal synthase (151 aa).

The 146-residue stretch at 6–151 (RVMPAHKHIA…DYDAYLAERV (146 aa)) folds into the MGS-like domain. Substrate-binding positions include histidine 19, lysine 23, 45 to 48 (TGTT), and 65 to 66 (SG). The active-site Proton donor/acceptor is the aspartate 71. Position 98 (histidine 98) interacts with substrate.

The protein belongs to the methylglyoxal synthase family.

The catalysed reaction is dihydroxyacetone phosphate = methylglyoxal + phosphate. Its function is as follows. Catalyzes the formation of methylglyoxal from dihydroxyacetone phosphate. The protein is Methylglyoxal synthase of Aliivibrio fischeri (strain MJ11) (Vibrio fischeri).